A 569-amino-acid chain; its full sequence is Proline--tRNA ligase (569 aa).

It belongs to the class-II aminoacyl-tRNA synthetase family. ProS type 1 subfamily. In terms of assembly, homodimer.

The protein localises to the cytoplasm. The enzyme catalyses tRNA(Pro) + L-proline + ATP = L-prolyl-tRNA(Pro) + AMP + diphosphate. Its function is as follows. Catalyzes the attachment of proline to tRNA(Pro) in a two-step reaction: proline is first activated by ATP to form Pro-AMP and then transferred to the acceptor end of tRNA(Pro). As ProRS can inadvertently accommodate and process non-cognate amino acids such as alanine and cysteine, to avoid such errors it has two additional distinct editing activities against alanine. One activity is designated as 'pretransfer' editing and involves the tRNA(Pro)-independent hydrolysis of activated Ala-AMP. The other activity is designated 'posttransfer' editing and involves deacylation of mischarged Ala-tRNA(Pro). The misacylated Cys-tRNA(Pro) is not edited by ProRS. The chain is Proline--tRNA ligase from Dehalococcoides mccartyi (strain ATCC BAA-2100 / JCM 16839 / KCTC 5957 / BAV1).